The sequence spans 138 residues: Nucleoside diphosphate kinase (138 aa).

ATP-binding residues include Lys10, Phe58, Arg86, Thr92, Arg103, and Asn113. His116 acts as the Pros-phosphohistidine intermediate in catalysis.

Belongs to the NDK family. Homotetramer. The cofactor is Mg(2+).

Its subcellular location is the cytoplasm. It carries out the reaction a 2'-deoxyribonucleoside 5'-diphosphate + ATP = a 2'-deoxyribonucleoside 5'-triphosphate + ADP. It catalyses the reaction a ribonucleoside 5'-diphosphate + ATP = a ribonucleoside 5'-triphosphate + ADP. In terms of biological role, major role in the synthesis of nucleoside triphosphates other than ATP. The ATP gamma phosphate is transferred to the NDP beta phosphate via a ping-pong mechanism, using a phosphorylated active-site intermediate. This is Nucleoside diphosphate kinase from Actinobacillus pleuropneumoniae serotype 5b (strain L20).